Consider the following 401-residue polypeptide: Argininosuccinate synthase (401 aa).

Residue 9-17 coordinates ATP; it reads AYSGGLDTS. Y86 is an L-citrulline binding site. G116 provides a ligand contact to ATP. Residues T118, N122, and D123 each coordinate L-aspartate. L-citrulline is bound at residue N122. The L-citrulline site is built by R126, S174, S183, E259, and Y271.

This sequence belongs to the argininosuccinate synthase family. Type 1 subfamily. In terms of assembly, homotetramer.

The protein localises to the cytoplasm. The catalysed reaction is L-citrulline + L-aspartate + ATP = 2-(N(omega)-L-arginino)succinate + AMP + diphosphate + H(+). Its pathway is amino-acid biosynthesis; L-arginine biosynthesis; L-arginine from L-ornithine and carbamoyl phosphate: step 2/3. The protein is Argininosuccinate synthase of Bacillus cereus (strain B4264).